Consider the following 382-residue polypeptide: Alanine racemase (382 aa).

The active-site Proton acceptor; specific for D-alanine is the Lys39. Lys39 bears the N6-(pyridoxal phosphate)lysine mark. Arg138 lines the substrate pocket. Tyr265 functions as the Proton acceptor; specific for L-alanine in the catalytic mechanism. Residue Met312 participates in substrate binding.

This sequence belongs to the alanine racemase family. Pyridoxal 5'-phosphate serves as cofactor.

The enzyme catalyses L-alanine = D-alanine. It participates in amino-acid biosynthesis; D-alanine biosynthesis; D-alanine from L-alanine: step 1/1. Functionally, catalyzes the interconversion of L-alanine and D-alanine. May also act on other amino acids. The sequence is that of Alanine racemase (alr) from Staphylococcus epidermidis (strain ATCC 35984 / DSM 28319 / BCRC 17069 / CCUG 31568 / BM 3577 / RP62A).